The following is a 294-amino-acid chain: Acetyl-coenzyme A carboxylase carboxyl transferase subunit beta (294 aa).

The CoA carboxyltransferase N-terminal domain occupies 29-294 (LWEKCPECGQ…TQVVKLQTNA (266 aa)). Zn(2+) contacts are provided by Cys-33, Cys-36, Cys-52, and Cys-55. A C4-type zinc finger spans residues 33-55 (CPECGQVVYRKDLIDNCSVCSNC).

Belongs to the AccD/PCCB family. Acetyl-CoA carboxylase is a heterohexamer composed of biotin carboxyl carrier protein (AccB), biotin carboxylase (AccC) and two subunits each of ACCase subunit alpha (AccA) and ACCase subunit beta (AccD). The cofactor is Zn(2+).

Its subcellular location is the cytoplasm. It catalyses the reaction N(6)-carboxybiotinyl-L-lysyl-[protein] + acetyl-CoA = N(6)-biotinyl-L-lysyl-[protein] + malonyl-CoA. The protein operates within lipid metabolism; malonyl-CoA biosynthesis; malonyl-CoA from acetyl-CoA: step 1/1. Component of the acetyl coenzyme A carboxylase (ACC) complex. Biotin carboxylase (BC) catalyzes the carboxylation of biotin on its carrier protein (BCCP) and then the CO(2) group is transferred by the transcarboxylase to acetyl-CoA to form malonyl-CoA. This Prochlorococcus marinus (strain NATL2A) protein is Acetyl-coenzyme A carboxylase carboxyl transferase subunit beta.